A 197-amino-acid polypeptide reads, in one-letter code: Protein lin-7 homolog C (197 aa).

Ala2 bears the N-acetylalanine mark. A Kinase interacting site motif is present at residues 2–13; the sequence is AALGEPVRLERD. The 56-residue stretch at 10 to 65 folds into the L27 domain; sequence LERDICRAIELLEKLQRSGEVPPQKLQALQRVLQSEFCNAVREVYEHVYETVDISS. In terms of domain architecture, PDZ spans 93–175; sequence VVELPKTEEG…KVKLVVRYTP (83 aa).

This sequence belongs to the lin-7 family. In terms of assembly, forms a complex with CASK and APBA1 or CASKIN1. Component of the brain-specific heterotrimeric complex (LIN-10-LIN-2-LIN-7 complex) composed of at least APBA1, CASK, and LIN7, which associates with the motor protein KIF17 to transport vesicles along microtubules. Can also interact with other modular proteins containing protein-protein interaction domains like PALS1, PALS2, MPP7, DLG1, DLG2 and DLG3 through its L27 domain. Interacts with DLG4 and GRIN2B as well as CDH1 and CTNNB1, the channels KCNJ12/Kir2.2, KCNJ4/Kir2.3 and probably KCNJ2/Kir2.1 and SLC6A12/BGT-1 via its PDZ domain. The association of LIN7A with cadherin and beta-catenin is calcium-dependent, occurs at synaptic junctions and requires the actin cytoskeleton. Interacts with EGFR, ERBB2, ERBB3 and ERBB4 with both PDZ and KID domains. Associates with KIF17 via APBA1. Interacts with HTR4. Forms a tripartite complex composed of DLG1, MPP7 and LIN7 (LIN7A or LIN7C). Interacts with MAPK12.

It is found in the cell membrane. It localises to the basolateral cell membrane. The protein resides in the cell junction. The protein localises to the postsynaptic density membrane. Its subcellular location is the tight junction. It is found in the synapse. It localises to the synaptosome. In terms of biological role, plays a role in establishing and maintaining the asymmetric distribution of channels and receptors at the plasma membrane of polarized cells. Forms membrane-associated multiprotein complexes that may regulate delivery and recycling of proteins to the correct membrane domains. The tripartite complex composed of LIN7 (LIN7A, LIN7B or LIN7C), CASK and APBA1 associates with the motor protein KIF17 to transport vesicles containing N-methyl-D-aspartate (NMDA) receptor subunit NR2B along microtubules. This complex may have the potential to couple synaptic vesicle exocytosis to cell adhesion in brain. Ensures the proper localization of GRIN2B (subunit 2B of the NMDA receptor) to neuronal postsynaptic density and may function in localizing synaptic vesicles at synapses where it is recruited by beta-catenin and cadherin. Required to localize Kir2 channels, GABA transporter (SLC6A12) and EGFR/ERBB1, ERBB2, ERBB3 and ERBB4 to the basolateral membrane of epithelial cells. This is Protein lin-7 homolog C (LIN7C) from Bos taurus (Bovine).